A 473-amino-acid polypeptide reads, in one-letter code: Membrane-bound acylglycerophosphatidylinositol O-acyltransferase MBOAT7 (473 aa).

Topologically, residues 1–5 (MTPEE) are cytoplasmic. Residues 6–22 (WTYLMVLLISIPVGFLF) traverse the membrane as a helical segment. Residues 23 to 33 (KKAGPGLKRWG) are Lumenal-facing. A helical transmembrane segment spans residues 34–57 (AAAVGLGLTLFTCGPHSLHSLITI). Residues 58 to 73 (LGTWALIQAQPCSCHA) lie on the Cytoplasmic side of the membrane. A helical membrane pass occupies residues 74 to 93 (LALAWTFSYLLFFRALSLLG). Residues 94 to 194 (LPTPTPFTNA…VPSLRPLLRR (101 aa)) are Lumenal-facing. The chain crosses the membrane as a helical span at residues 195-212 (AWPAPLFGLLFLLSSHLF). Topologically, residues 213-231 (PLEAVREDAFYARPLPTRL) are cytoplasmic. Residues 232-261 (FYMIPVFFAFRMRFYVAWIAAECGCIAAGF) form a helical membrane-spanning segment. At 262–426 (GAYPVAAKAR…LSMADTLRYW (165 aa)) the chain is on the lumenal side. Asparagine 321 carries an N-linked (GlcNAc...) asparagine glycan. The chain crosses the membrane as a helical span at residues 427–447 (ASIYFWVHFLALACLGLGLVL). Residues 448 to 473 (GGGSPSKRKTPSQATSSQAKEKLREE) lie on the Cytoplasmic side of the membrane. Residues 451–473 (SPSKRKTPSQATSSQAKEKLREE) are disordered.

The protein belongs to the membrane-bound acyltransferase family. In terms of assembly, interacts with SPTSSA; the interaction facilitates MBOAT7 location to mitochondria-associated membranes (MAMs).

The protein localises to the endoplasmic reticulum membrane. It catalyses the reaction a 1-acyl-sn-glycero-3-phospho-(1D-myo-inositol) + an acyl-CoA = a 1,2-diacyl-sn-glycero-3-phospho-(1D-myo-inositol) + CoA. The catalysed reaction is 1-octadecanoyl-sn-glycero-3-phospho-(1D-myo-inositol) + (5Z,8Z,11Z,14Z)-eicosatetraenoyl-CoA = 1-octadecanoyl-2-(5Z,8Z,11Z,14Z-eicosatetraenoyl)-sn-glycero-3-phospho-(1D-myo-inositol) + CoA. It carries out the reaction a 1-acyl-sn-glycero-3-phospho-(1D-myo-inositol) + (5Z,8Z,11Z,14Z)-eicosatetraenoyl-CoA = a 1-acyl-2-(5Z,8Z,11Z,14Z-eicosatetraenoyl)-sn-glycero-3-phospho-(1D-myo-inositol) + CoA. The enzyme catalyses (5Z,8Z,11Z,14Z)-eicosatetraenoyl-CoA + 1-hexadecanoyl-sn-glycero-3-phosphocholine = 1-hexadecanoyl-2-(5Z,8Z,11Z,14Z-eicosatetraenoyl)-sn-glycero-3-phosphocholine + CoA. Its pathway is lipid metabolism; phospholipid metabolism. Its function is as follows. Acyltransferase which catalyzes the transfer of an acyl group from an acyl-CoA to a lysophosphatidylinositol (1-acylglycerophosphatidylinositol or LPI) leading to the production of a phosphatidylinositol (1,2-diacyl-sn-glycero-3-phosphoinositol or PI) and participates in the reacylation step of the phospholipid remodeling pathway also known as the Lands cycle. Prefers arachidonoyl-CoA as the acyl donor, thus contributing to the regulation of free levels arachidonic acid in cell. In liver, participates in the regulation of triglyceride metabolism through the phosphatidylinositol acyl-chain remodeling regulation. The polypeptide is Membrane-bound acylglycerophosphatidylinositol O-acyltransferase MBOAT7 (Mus musculus (Mouse)).